Consider the following 321-residue polypeptide: Arginine-hydroxylase NDUFAF5, mitochondrial (321 aa).

The transit peptide at 1–25 (MNVSVKSLRGVSRTWRSFSSRQGMN) directs the protein to the mitochondrion.

The protein belongs to the methyltransferase superfamily. As to quaternary structure, interacts with NDUFS7.

The protein localises to the mitochondrion inner membrane. Arginine hydroxylase that mediates hydroxylation of 'Arg-111' of NDUFS7 and is involved in the assembly of mitochondrial NADH:ubiquinone oxidoreductase complex (complex I, MT-ND1) at early stages. May also have methyltransferase activity. The polypeptide is Arginine-hydroxylase NDUFAF5, mitochondrial (Danio rerio (Zebrafish)).